The sequence spans 149 residues: UPF0260 protein Pput_1301 (149 aa).

It belongs to the UPF0260 family.

This is UPF0260 protein Pput_1301 from Pseudomonas putida (strain ATCC 700007 / DSM 6899 / JCM 31910 / BCRC 17059 / LMG 24140 / F1).